Reading from the N-terminus, the 873-residue chain is Actin-related protein 8 (873 aa).

The tract at residues 108 to 129 (DEQVKPTSSTSSTSTTEEVEIK) is disordered. Positions 114-123 (TSSTSSTSTT) are enriched in low complexity. Position 368-371 (368-371 (DLGH)) interacts with ATP. The span at 596 to 650 (NNNNNNNNSSSSSNNNNNNNNSGSNSNINSYNNNNNNNNNNNNNNNNNNNNSFNN) shows a compositional bias: low complexity. Residues 596-701 (NNNNNNNNSS…TSSPTKKLKI (106 aa)) form a disordered region. Over residues 651–668 (VTIVTSTLNSNSTVPSTL) the composition is skewed to polar residues. A compositionally biased stretch (low complexity) spans 669–696 (NSNSTVPSISNSNSTVPSTSTSTTSSPT). The stretch at 762–804 (FKQLEQQYQAQQLQFQQQLQQQQQQQQQLQQQLQNSTNSATTT) forms a coiled coil.

It belongs to the actin family. ARP8 subfamily. Component of the chromatin remodeling INO80 complex. Exists as monomers and dimers, but the dimer is most probably the biologically relevant form required for stable interactions with histones that exploits the twofold symmetry of the nucleosome core.

The protein localises to the nucleus. Its subcellular location is the cytoplasm. It is found in the cytoskeleton. Its function is as follows. Plays an important role in the functional organization of mitotic chromosomes. Exhibits low basal ATPase activity, and unable to polymerize. Functionally, proposed core component of the chromatin remodeling INO80 complex which is involved in transcriptional regulation, DNA replication and probably DNA repair. Strongly prefer nucleosomes and H3-H4 tetramers over H2A-H2B dimers, suggesting it may act as a nucleosome recognition module within the complex. This Dictyostelium discoideum (Social amoeba) protein is Actin-related protein 8.